Here is a 68-residue protein sequence, read N- to C-terminus: Putative protein YfaH (68 aa).

This chain is Putative protein YfaH (yfaH), found in Escherichia coli (strain K12).